Consider the following 300-residue polypeptide: UDP-N-acetylenolpyruvoylglucosamine reductase (300 aa).

In terms of domain architecture, FAD-binding PCMH-type spans 28–190 (KIGGRVKYLV…TRAMMSFKKE (163 aa)). The active site involves Arg-169. Ser-219 (proton donor) is an active-site residue. Glu-290 is an active-site residue.

It belongs to the MurB family. Requires FAD as cofactor.

It localises to the cytoplasm. The catalysed reaction is UDP-N-acetyl-alpha-D-muramate + NADP(+) = UDP-N-acetyl-3-O-(1-carboxyvinyl)-alpha-D-glucosamine + NADPH + H(+). It participates in cell wall biogenesis; peptidoglycan biosynthesis. In terms of biological role, cell wall formation. The protein is UDP-N-acetylenolpyruvoylglucosamine reductase of Thermotoga sp. (strain RQ2).